The chain runs to 234 residues: Urease accessory protein UreG 1 (234 aa).

The segment at 1-29 (MTRTPTGVPMHLGHTHDAPAAVSADATRP) is disordered. Position 42-49 (42-49 (GPVGSGKT)) interacts with GTP.

The protein belongs to the SIMIBI class G3E GTPase family. UreG subfamily. Homodimer. UreD, UreF and UreG form a complex that acts as a GTP-hydrolysis-dependent molecular chaperone, activating the urease apoprotein by helping to assemble the nickel containing metallocenter of UreC. The UreE protein probably delivers the nickel.

The protein resides in the cytoplasm. Facilitates the functional incorporation of the urease nickel metallocenter. This process requires GTP hydrolysis, probably effectuated by UreG. This is Urease accessory protein UreG 1 from Streptomyces griseus subsp. griseus (strain JCM 4626 / CBS 651.72 / NBRC 13350 / KCC S-0626 / ISP 5235).